Consider the following 262-residue polypeptide: Glutamate racemase (262 aa).

Residues 7–8 (DS) and 39–40 (YG) contribute to the substrate site. Catalysis depends on Cys70, which acts as the Proton donor/acceptor. 71–72 (NT) contributes to the substrate binding site. Cys182 functions as the Proton donor/acceptor in the catalytic mechanism. 183–184 (TH) serves as a coordination point for substrate.

Belongs to the aspartate/glutamate racemases family.

The enzyme catalyses L-glutamate = D-glutamate. The protein operates within cell wall biogenesis; peptidoglycan biosynthesis. In terms of biological role, provides the (R)-glutamate required for cell wall biosynthesis. The chain is Glutamate racemase from Campylobacter concisus (strain 13826).